Here is a 106-residue protein sequence, read N- to C-terminus: Toxin-like structure LSTX-D3 (106 aa).

The first 20 residues, 1–20 (MMKVLVVVALLVTLISYSSS), serve as a signal peptide directing secretion. A propeptide spanning residues 21–41 (EGIDDLEADELLSLMANEQTR) is cleaved from the precursor. 4 cysteine pairs are disulfide-bonded: C45/C60, C52/C69, C59/C85, and C71/C83.

The protein belongs to the neurotoxin 19 (CSTX) family. 02 (D7) subfamily. In terms of tissue distribution, expressed by the venom gland.

The protein resides in the secreted. The sequence is that of Toxin-like structure LSTX-D3 from Lycosa singoriensis (Wolf spider).